We begin with the raw amino-acid sequence, 260 residues long: Cytosolic Fe-S cluster assembly factor Nubp2 homolog (260 aa).

Gly14–Ser21 provides a ligand contact to ATP. 2 residues coordinate [4Fe-4S] cluster: Cys188 and Cys191.

This sequence belongs to the Mrp/NBP35 ATP-binding proteins family. NUBP2/CFD1 subfamily. In terms of assembly, heterotetramer of 2 Nubp1 and 2 Nubp2 chains. It depends on [4Fe-4S] cluster as a cofactor.

It is found in the cytoplasm. In terms of biological role, component of the cytosolic iron-sulfur (Fe/S) protein assembly (CIA) machinery. Required for maturation of extramitochondrial Fe-S proteins. The Nubp1-Nubp2 heterotetramer forms a Fe-S scaffold complex, mediating the de novo assembly of an Fe-S cluster and its transfer to target apoproteins. The chain is Cytosolic Fe-S cluster assembly factor Nubp2 homolog from Drosophila melanogaster (Fruit fly).